The sequence spans 126 residues: Holo-[acyl-carrier-protein] synthase (126 aa).

Mg(2+) contacts are provided by D9 and E57.

This sequence belongs to the P-Pant transferase superfamily. AcpS family. Mg(2+) is required as a cofactor.

It localises to the cytoplasm. It catalyses the reaction apo-[ACP] + CoA = holo-[ACP] + adenosine 3',5'-bisphosphate + H(+). Its function is as follows. Transfers the 4'-phosphopantetheine moiety from coenzyme A to a Ser of acyl-carrier-protein. The sequence is that of Holo-[acyl-carrier-protein] synthase from Idiomarina loihiensis (strain ATCC BAA-735 / DSM 15497 / L2-TR).